Here is a 282-residue protein sequence, read N- to C-terminus: Ribosomal RNA small subunit methyltransferase A (282 aa).

Positions 28, 30, 55, 77, 103, and 122 each coordinate S-adenosyl-L-methionine.

The protein belongs to the class I-like SAM-binding methyltransferase superfamily. rRNA adenine N(6)-methyltransferase family. RsmA subfamily.

It localises to the cytoplasm. The enzyme catalyses adenosine(1518)/adenosine(1519) in 16S rRNA + 4 S-adenosyl-L-methionine = N(6)-dimethyladenosine(1518)/N(6)-dimethyladenosine(1519) in 16S rRNA + 4 S-adenosyl-L-homocysteine + 4 H(+). Specifically dimethylates two adjacent adenosines (A1518 and A1519) in the loop of a conserved hairpin near the 3'-end of 16S rRNA in the 30S particle. May play a critical role in biogenesis of 30S subunits. The sequence is that of Ribosomal RNA small subunit methyltransferase A from Paracoccus denitrificans (strain Pd 1222).